Here is a 239-residue protein sequence, read N- to C-terminus: Probable transcriptional regulatory protein Aave_3203 (239 aa).

Positions 1 to 20 (MAGHSKWANIQHRKGRQDEK) are disordered.

The protein belongs to the TACO1 family.

It is found in the cytoplasm. The protein is Probable transcriptional regulatory protein Aave_3203 of Paracidovorax citrulli (strain AAC00-1) (Acidovorax citrulli).